Here is a 66-residue protein sequence, read N- to C-terminus: DNA-directed RNA polymerase subunit omega (66 aa).

This sequence belongs to the RNA polymerase subunit omega family. As to quaternary structure, the RNAP catalytic core consists of 2 alpha, 1 beta, 1 beta' and 1 omega subunit. When a sigma factor is associated with the core the holoenzyme is formed, which can initiate transcription.

It carries out the reaction RNA(n) + a ribonucleoside 5'-triphosphate = RNA(n+1) + diphosphate. Its function is as follows. Promotes RNA polymerase assembly. Latches the N- and C-terminal regions of the beta' subunit thereby facilitating its interaction with the beta and alpha subunits. This Geobacillus kaustophilus (strain HTA426) protein is DNA-directed RNA polymerase subunit omega.